We begin with the raw amino-acid sequence, 156 residues long: ATP synthase subunit b (156 aa).

Residues 7 to 29 (LFAQMVVFLVLAWFTMKFVWPPL) traverse the membrane as a helical segment.

This sequence belongs to the ATPase B chain family. As to quaternary structure, F-type ATPases have 2 components, F(1) - the catalytic core - and F(0) - the membrane proton channel. F(1) has five subunits: alpha(3), beta(3), gamma(1), delta(1), epsilon(1). F(0) has three main subunits: a(1), b(2) and c(10-14). The alpha and beta chains form an alternating ring which encloses part of the gamma chain. F(1) is attached to F(0) by a central stalk formed by the gamma and epsilon chains, while a peripheral stalk is formed by the delta and b chains.

Its subcellular location is the cell inner membrane. Its function is as follows. F(1)F(0) ATP synthase produces ATP from ADP in the presence of a proton or sodium gradient. F-type ATPases consist of two structural domains, F(1) containing the extramembraneous catalytic core and F(0) containing the membrane proton channel, linked together by a central stalk and a peripheral stalk. During catalysis, ATP synthesis in the catalytic domain of F(1) is coupled via a rotary mechanism of the central stalk subunits to proton translocation. Component of the F(0) channel, it forms part of the peripheral stalk, linking F(1) to F(0). The polypeptide is ATP synthase subunit b (Burkholderia cenocepacia (strain ATCC BAA-245 / DSM 16553 / LMG 16656 / NCTC 13227 / J2315 / CF5610) (Burkholderia cepacia (strain J2315))).